We begin with the raw amino-acid sequence, 55 residues long: Small ribosomal subunit protein bS21 (55 aa).

This sequence belongs to the bacterial ribosomal protein bS21 family.

The chain is Small ribosomal subunit protein bS21 from Phytoplasma mali (strain AT).